A 524-amino-acid polypeptide reads, in one-letter code: Nucleoporin NUP56 (524 aa).

Positions 1–219 (MADDPHNTST…SSMAKFASST (219 aa)) are disordered. Basic and acidic residues-rich tracts occupy residues 28-80 (VKED…EPEK), 114-168 (THDE…KEVE), and 179-199 (SAEK…KVDK). A Nuclear localization signal motif is present at residues 37–44 (ARRELKQT). Residues 111 to 133 (KKRTHDELEQDGKEEEEKKEGEK) adopt a coiled-coil conformation. Residues 200 to 219 (PQTSSSAFANSSMAKFASST) are compositionally biased toward polar residues. FG repeat units follow at residues 223–224 (FG), 226–227 (FG), 237–238 (FG), 247–248 (FG), 266–267 (FG), 312–313 (FG), and 328–329 (FG). 2 disordered regions span residues 247-284 (FGSK…QAGG) and 300-371 (GSSA…GEEK). A compositionally biased stretch (low complexity) spans 248-277 (GSKSADASAAPAGPPKLSFGSASAASPFAS). Acidic residues-rich tracts occupy residues 332–345 (ESDE…EEGE) and 352–362 (GEGEEKEEEEK). A coiled-coil region spans residues 345-376 (EENKSENGEGEEKEEEEKEEKASGEEKKKFKL). The RanBD1 domain maps to 377–475 (QKVHIDDGEG…TPILPAMKFQ (99 aa)). A coiled-coil region spans residues 503–524 (SQANATQFSNMVEKIKEKLAAA).

The nuclear pore complex (NPC) constitutes the exclusive means of nucleocytoplasmic transport. NPCs allow the passive diffusion of ions and small molecules and the active, nuclear transport receptor-mediated bidirectional transport of macromolecules such as proteins, RNAs, ribonucleoparticles (RNPs), and ribosomal subunits across the nuclear envelope. The 55-60 MDa NPC is composed of at least 28 different subunits: AMO1, ELYS, GLE1, GLE2, MLP1, NDC1, NIC96, NSP1, NUP133, NUP145, NUP152, NUP159, NUP170, NUP188, NUP192, NUP37, NUP49, NUP53, NUP56, NUP57, NUP82, NUP84, NUP85, POM152, POM33, POM34, SEC13 and SEH1. Due to its 8-fold rotational symmetry, all subunits are present with 8 copies or multiples thereof.

The protein localises to the nucleus. Its subcellular location is the nuclear pore complex. It is found in the nucleus membrane. Its function is as follows. Functions as a component of the nuclear pore complex (NPC). NPC components, collectively referred to as nucleoporins (NUPs), can play the role of both NPC structural components and of docking or interaction partners for transiently associated nuclear transport factors. Active directional transport is assured by both, a Phe-Gly (FG) repeat affinity gradient for these transport factors across the NPC and a transport cofactor concentration gradient across the nuclear envelope (GSP1 and GSP2 GTPases associated predominantly with GTP in the nucleus, with GDP in the cytoplasm). The polypeptide is Nucleoporin NUP56 (NUP56) (Chaetomium thermophilum (strain DSM 1495 / CBS 144.50 / IMI 039719) (Thermochaetoides thermophila)).